A 388-amino-acid polypeptide reads, in one-letter code: Lipid-A-disaccharide synthase (388 aa).

The protein belongs to the LpxB family.

It catalyses the reaction a lipid X + a UDP-2-N,3-O-bis[(3R)-3-hydroxyacyl]-alpha-D-glucosamine = a lipid A disaccharide + UDP + H(+). It functions in the pathway bacterial outer membrane biogenesis; LPS lipid A biosynthesis. Its function is as follows. Condensation of UDP-2,3-diacylglucosamine and 2,3-diacylglucosamine-1-phosphate to form lipid A disaccharide, a precursor of lipid A, a phosphorylated glycolipid that anchors the lipopolysaccharide to the outer membrane of the cell. This chain is Lipid-A-disaccharide synthase, found in Burkholderia mallei (strain ATCC 23344).